Reading from the N-terminus, the 84-residue chain is RNA-binding protein Hfq (84 aa).

The 61-residue stretch at 11–71 (DVFLNFIRKN…ISTVMPSTPI (61 aa)) folds into the Sm domain.

Belongs to the Hfq family. Homohexamer.

Functionally, RNA chaperone that binds small regulatory RNA (sRNAs) and mRNAs to facilitate mRNA translational regulation in response to envelope stress, environmental stress and changes in metabolite concentrations. Also binds with high specificity to tRNAs. The chain is RNA-binding protein Hfq from Paramagnetospirillum magneticum (strain ATCC 700264 / AMB-1) (Magnetospirillum magneticum).